The sequence spans 347 residues: N-acetyl-gamma-glutamyl-phosphate reductase (347 aa).

Residue Cys152 is part of the active site.

The protein belongs to the NAGSA dehydrogenase family. Type 1 subfamily.

The protein resides in the cytoplasm. The enzyme catalyses N-acetyl-L-glutamate 5-semialdehyde + phosphate + NADP(+) = N-acetyl-L-glutamyl 5-phosphate + NADPH + H(+). Its pathway is amino-acid biosynthesis; L-arginine biosynthesis; N(2)-acetyl-L-ornithine from L-glutamate: step 3/4. In terms of biological role, catalyzes the NADPH-dependent reduction of N-acetyl-5-glutamyl phosphate to yield N-acetyl-L-glutamate 5-semialdehyde. The sequence is that of N-acetyl-gamma-glutamyl-phosphate reductase from Neisseria meningitidis serogroup A / serotype 4A (strain DSM 15465 / Z2491).